The following is a 216-amino-acid chain: ATP phosphoribosyltransferase (216 aa).

Belongs to the ATP phosphoribosyltransferase family. Short subfamily. Heteromultimer composed of HisG and HisZ subunits.

It is found in the cytoplasm. It catalyses the reaction 1-(5-phospho-beta-D-ribosyl)-ATP + diphosphate = 5-phospho-alpha-D-ribose 1-diphosphate + ATP. It functions in the pathway amino-acid biosynthesis; L-histidine biosynthesis; L-histidine from 5-phospho-alpha-D-ribose 1-diphosphate: step 1/9. Functionally, catalyzes the condensation of ATP and 5-phosphoribose 1-diphosphate to form N'-(5'-phosphoribosyl)-ATP (PR-ATP). Has a crucial role in the pathway because the rate of histidine biosynthesis seems to be controlled primarily by regulation of HisG enzymatic activity. The chain is ATP phosphoribosyltransferase from Thiobacillus denitrificans (strain ATCC 25259 / T1).